Consider the following 116-residue polypeptide: Flagellar transcriptional regulator FlhD (116 aa).

This sequence belongs to the FlhD family. In terms of assembly, homodimer; disulfide-linked. Forms a heterohexamer composed of two FlhC and four FlhD subunits. Each FlhC binds a FlhD dimer, forming a heterotrimer, and a hexamer assembles by dimerization of two heterotrimers.

The protein resides in the cytoplasm. In terms of biological role, functions in complex with FlhC as a master transcriptional regulator that regulates transcription of several flagellar and non-flagellar operons by binding to their promoter region. Activates expression of class 2 flagellar genes, including fliA, which is a flagellum-specific sigma factor that turns on the class 3 genes. Also regulates genes whose products function in a variety of physiological pathways. This is Flagellar transcriptional regulator FlhD from Proteus mirabilis (strain HI4320).